Reading from the N-terminus, the 117-residue chain is Large ribosomal subunit protein bL20 (117 aa).

Belongs to the bacterial ribosomal protein bL20 family.

Functionally, binds directly to 23S ribosomal RNA and is necessary for the in vitro assembly process of the 50S ribosomal subunit. It is not involved in the protein synthesizing functions of that subunit. This is Large ribosomal subunit protein bL20 from Crocosphaera subtropica (strain ATCC 51142 / BH68) (Cyanothece sp. (strain ATCC 51142)).